The sequence spans 337 residues: UDP-N-acetylenolpyruvoylglucosamine reductase (337 aa).

The FAD-binding PCMH-type domain occupies 16 to 187 (ALPGRAARYQ…TSVIFRLAKA (172 aa)). Residue arginine 160 is part of the active site. Catalysis depends on serine 237, which acts as the Proton donor. The active site involves glutamate 333.

FAD serves as cofactor.

The protein resides in the cytoplasm. The catalysed reaction is UDP-N-acetyl-alpha-D-muramate + NADP(+) = UDP-N-acetyl-3-O-(1-carboxyvinyl)-alpha-D-glucosamine + NADPH + H(+). It participates in cell wall biogenesis; peptidoglycan biosynthesis. Cell wall formation. The polypeptide is UDP-N-acetylenolpyruvoylglucosamine reductase (Dechloromonas aromatica (strain RCB)).